The sequence spans 207 residues: LexA repressor (207 aa).

Positions 28–48 (RAEIAQKLGFKSANAAEEHLK) form a DNA-binding region, H-T-H motif. Active-site for autocatalytic cleavage activity residues include Ser-124 and Lys-161.

This sequence belongs to the peptidase S24 family. As to quaternary structure, homodimer.

It catalyses the reaction Hydrolysis of Ala-|-Gly bond in repressor LexA.. Represses a number of genes involved in the response to DNA damage (SOS response), including recA and lexA. In the presence of single-stranded DNA, RecA interacts with LexA causing an autocatalytic cleavage which disrupts the DNA-binding part of LexA, leading to derepression of the SOS regulon and eventually DNA repair. The sequence is that of LexA repressor from Aeromonas salmonicida (strain A449).